We begin with the raw amino-acid sequence, 806 residues long: MSGWPRIYYKLLNLPLSILVKSKSIPAEPAQELGLDTSRPIMYVLPYNSKADLLTLRAQCLAHDLPDPLEPLEIDGALLPRYVFIHGGPRVFTYYTPKEESVKLFHDYLDLHRGNPALDVQMVPVSVMFGRAPGREKGEVNPPLRMLNGVQKFFAISWLGRDSFVRFSPSVSLRRMADEHGTDKIIAQKLARVARMHFARQRLAAVGPRLPARQDLFNKLLASKAIARAVEDEARSKKISHEKAQQNAIALMEEIAANFSYEMIRLTDRILGFTWNRLYQGINVHNAERVRQLAHDGHEIVYVPCHRSHMDYLLLSYVLYHQGLVPPHIAAGINLNFWPAGPIFRRLGAFFIRRTFKGNKLYSTVFREYLGELFSRGYSVEYFVEGGRSRTGRLLDPKTGTLSMTIQAMLRGGTRPITLVPIYIGYEHVMEVGTYAKELRGATKEKESLPQMLRGLSKLRNLGQGYVNFGEPMPLMTYLNQHVPEWRESIDPIEAIRPAWLTPTVNSIAADLMVRINNAGAANAMNLCCTALLASRQRSLTREQLTEQLDCYLDLMRNVPYSTDSTVPAASAGELIDHALQMNKFEAEKDTIGDIIILPREQAVLMTYYRNNIAHMLIMPSLMAAIITQHRRISRDALQQHVEALYPMLKAELFLRWEREELASVIDALASEMQRQGLITLQDNELHINPAHSRTLQLLAAGARETLQRYAITFWLLSANPSINRSTLEKESRTVAQRLSVLHGINAPEFFDKAVFSSLVLTLRDEGYISDTGDAEPAETMKIYQMLADLITSDVRLTIESATQGE.

The HXXXXD motif signature appears at C305–M310.

This sequence belongs to the GPAT/DAPAT family.

It is found in the cell inner membrane. The enzyme catalyses sn-glycerol 3-phosphate + an acyl-CoA = a 1-acyl-sn-glycero-3-phosphate + CoA. It functions in the pathway phospholipid metabolism; CDP-diacylglycerol biosynthesis; CDP-diacylglycerol from sn-glycerol 3-phosphate: step 1/3. In Salmonella arizonae (strain ATCC BAA-731 / CDC346-86 / RSK2980), this protein is Glycerol-3-phosphate acyltransferase.